The sequence spans 246 residues: Probable septum site-determining protein MinC (246 aa).

The protein belongs to the MinC family. As to quaternary structure, interacts with MinD and FtsZ.

Functionally, cell division inhibitor that blocks the formation of polar Z ring septums. Rapidly oscillates between the poles of the cell to destabilize FtsZ filaments that have formed before they mature into polar Z rings. Prevents FtsZ polymerization. This is Probable septum site-determining protein MinC from Pseudomonas syringae pv. tomato (strain ATCC BAA-871 / DC3000).